Consider the following 128-residue polypeptide: Protein Wnt-8 (128 aa).

Residue Ser-1 is the site of O-palmitoleoyl serine attachment. 2 cysteine pairs are disulfide-bonded: Cys-69-Cys-109 and Cys-85-Cys-102. Residue Asn-72 is glycosylated (N-linked (GlcNAc...) asparagine).

The protein belongs to the Wnt family. In terms of processing, palmitoleoylation is required for efficient binding to frizzled receptors. Depalmitoleoylation leads to Wnt signaling pathway inhibition. Post-translationally, proteolytic processing by tiki1 and tiki2 promotes oxidation and formation of large disulfide-bond oligomers, leading to inactivation of wnt8.

The protein resides in the secreted. It localises to the extracellular space. The protein localises to the extracellular matrix. In terms of biological role, ligand for members of the frizzled family of seven transmembrane receptors. Probable developmental protein. May be a signaling molecule which affects the development of discrete regions of tissues. Is likely to signal over only few cell diameters. The polypeptide is Protein Wnt-8 (WNT-8) (Evasterias troschelii (Mottled sea star)).